Here is a 231-residue protein sequence, read N- to C-terminus: Uracil-DNA glycosylase (231 aa).

The active-site Proton acceptor is the aspartate 74.

It belongs to the uracil-DNA glycosylase (UDG) superfamily. UNG family.

The protein localises to the cytoplasm. It catalyses the reaction Hydrolyzes single-stranded DNA or mismatched double-stranded DNA and polynucleotides, releasing free uracil.. Its function is as follows. Excises uracil residues from the DNA which can arise as a result of misincorporation of dUMP residues by DNA polymerase or due to deamination of cytosine. The chain is Uracil-DNA glycosylase from Campylobacter jejuni subsp. doylei (strain ATCC BAA-1458 / RM4099 / 269.97).